A 157-amino-acid polypeptide reads, in one-letter code: Transcription elongation factor GreA (157 aa).

It belongs to the GreA/GreB family.

Functionally, necessary for efficient RNA polymerase transcription elongation past template-encoded arresting sites. The arresting sites in DNA have the property of trapping a certain fraction of elongating RNA polymerases that pass through, resulting in locked ternary complexes. Cleavage of the nascent transcript by cleavage factors such as GreA or GreB allows the resumption of elongation from the new 3'terminus. GreA releases sequences of 2 to 3 nucleotides. In Chelativorans sp. (strain BNC1), this protein is Transcription elongation factor GreA.